Consider the following 456-residue polypeptide: Putative alanyl-tRNA editing protein alaX (456 aa).

His125, His129, Cys240, and His244 together coordinate Zn(2+).

Belongs to the class-II aminoacyl-tRNA synthetase family. Alax-L subfamily. Requires Zn(2+) as cofactor.

Its function is as follows. May function in trans to edit the amino acid moiety from incorrectly charged tRNA(Ala). The polypeptide is Putative alanyl-tRNA editing protein alaX (Saccharomyces cerevisiae (strain ATCC 204508 / S288c) (Baker's yeast)).